Consider the following 281-residue polypeptide: Phosphonates import ATP-binding protein PhnC (281 aa).

In terms of domain architecture, ABC transporter spans 5-253; that stretch reads IEVCGLTKSF…MLRDLYGTEA (249 aa). 38-45 provides a ligand contact to ATP; sequence GASGSGKS.

The protein belongs to the ABC transporter superfamily. Phosphonates importer (TC 3.A.1.9.1) family. As to quaternary structure, the complex is composed of two ATP-binding proteins (PhnC), two transmembrane proteins (PhnE) and a solute-binding protein (PhnD).

The protein resides in the cell inner membrane. The enzyme catalyses phosphonate(out) + ATP + H2O = phosphonate(in) + ADP + phosphate + H(+). Functionally, part of the ABC transporter complex PhnCDE involved in phosphonates import. Responsible for energy coupling to the transport system. This is Phosphonates import ATP-binding protein PhnC from Cupriavidus pinatubonensis (strain JMP 134 / LMG 1197) (Cupriavidus necator (strain JMP 134)).